We begin with the raw amino-acid sequence, 716 residues long: Radial spoke head protein 4 homolog A (716 aa).

Disordered stretches follow at residues 1–164 (MEDS…CGRR), 375–410 (EGED…PKSF), 506–526 (GEEE…FEEN), and 697–716 (LLAA…DDYD). Basic and acidic residues predominate over residues 8 to 25 (KQEKENQEELGETRRPWE). Low complexity-rich tracts occupy residues 29–42 (AASP…SSEP), 54–66 (QSRS…PQSR), and 80–100 (SSPA…LAPA). The segment covering 140-156 (HHTSQSEGNTFQQSQQP) has biased composition (polar residues). A compositionally biased stretch (acidic residues) spans 375 to 389 (EGEDEEEVEEEDVAE). Serine 396 is subject to Phosphoserine. 2 stretches are compositionally biased toward acidic residues: residues 506–516 (GEEEGEEEEEA) and 701–716 (ENEE…DDYD).

This sequence belongs to the flagellar radial spoke RSP4/6 family. Interacts with RSPH6A. Expressed in trachea, lungs, and testes. Very strong expression is detected in nasal brushings.

The protein localises to the cytoplasm. Its subcellular location is the cytoskeleton. It is found in the cilium axoneme. It localises to the cell projection. The protein resides in the cilium. Its function is as follows. Component of the axonemal radial spoke head which plays an important role in ciliary motility. Essential for triplet radial spokes (RS1, RS2 and RS3) head assembly in the motile cilia. This is Radial spoke head protein 4 homolog A (RSPH4A) from Homo sapiens (Human).